A 510-amino-acid chain; its full sequence is tRNA-2-methylthio-N(6)-dimethylallyladenosine synthase (510 aa).

Positions 19–144 (RTYQVRTFGC…LPVLLERARH (126 aa)) constitute an MTTase N-terminal domain. 6 residues coordinate [4Fe-4S] cluster: Cys-28, Cys-73, Cys-107, Cys-181, Cys-185, and Cys-188. The region spanning 167 to 397 (RESPYAAWVS…TALQDRITYE (231 aa)) is the Radical SAM core domain. Residues 400–470 (QAQTGRTLEV…PHYLEADDVS (71 aa)) enclose the TRAM domain. Over residues 482–492 (AWEARQARPEP) the composition is skewed to basic and acidic residues. The disordered stretch occupies residues 482 to 510 (AWEARQARPEPESTGPRPVGLGLPTLRRA).

Belongs to the methylthiotransferase family. MiaB subfamily. Monomer. It depends on [4Fe-4S] cluster as a cofactor.

It is found in the cytoplasm. It carries out the reaction N(6)-dimethylallyladenosine(37) in tRNA + (sulfur carrier)-SH + AH2 + 2 S-adenosyl-L-methionine = 2-methylsulfanyl-N(6)-dimethylallyladenosine(37) in tRNA + (sulfur carrier)-H + 5'-deoxyadenosine + L-methionine + A + S-adenosyl-L-homocysteine + 2 H(+). In terms of biological role, catalyzes the methylthiolation of N6-(dimethylallyl)adenosine (i(6)A), leading to the formation of 2-methylthio-N6-(dimethylallyl)adenosine (ms(2)i(6)A) at position 37 in tRNAs that read codons beginning with uridine. This is tRNA-2-methylthio-N(6)-dimethylallyladenosine synthase from Kineococcus radiotolerans (strain ATCC BAA-149 / DSM 14245 / SRS30216).